A 178-amino-acid chain; its full sequence is ATP synthase subunit delta (178 aa).

It belongs to the ATPase delta chain family. F-type ATPases have 2 components, F(1) - the catalytic core - and F(0) - the membrane proton channel. F(1) has five subunits: alpha(3), beta(3), gamma(1), delta(1), epsilon(1). F(0) has three main subunits: a(1), b(2) and c(10-14). The alpha and beta chains form an alternating ring which encloses part of the gamma chain. F(1) is attached to F(0) by a central stalk formed by the gamma and epsilon chains, while a peripheral stalk is formed by the delta and b chains.

Its subcellular location is the cell membrane. Its function is as follows. F(1)F(0) ATP synthase produces ATP from ADP in the presence of a proton or sodium gradient. F-type ATPases consist of two structural domains, F(1) containing the extramembraneous catalytic core and F(0) containing the membrane proton channel, linked together by a central stalk and a peripheral stalk. During catalysis, ATP synthesis in the catalytic domain of F(1) is coupled via a rotary mechanism of the central stalk subunits to proton translocation. In terms of biological role, this protein is part of the stalk that links CF(0) to CF(1). It either transmits conformational changes from CF(0) to CF(1) or is implicated in proton conduction. The chain is ATP synthase subunit delta from Streptococcus mutans serotype c (strain ATCC 700610 / UA159).